Here is a 156-residue protein sequence, read N- to C-terminus: Deoxyuridine 5'-triphosphate nucleotidohydrolase (156 aa).

Substrate is bound by residues 76 to 78 (RSG), N89, 93 to 95 (TVD), and K103.

The protein belongs to the dUTPase family. It depends on Mg(2+) as a cofactor.

It carries out the reaction dUTP + H2O = dUMP + diphosphate + H(+). The protein operates within pyrimidine metabolism; dUMP biosynthesis; dUMP from dCTP (dUTP route): step 2/2. Its function is as follows. This enzyme is involved in nucleotide metabolism: it produces dUMP, the immediate precursor of thymidine nucleotides and it decreases the intracellular concentration of dUTP so that uracil cannot be incorporated into DNA. The chain is Deoxyuridine 5'-triphosphate nucleotidohydrolase from Rhizobium johnstonii (strain DSM 114642 / LMG 32736 / 3841) (Rhizobium leguminosarum bv. viciae).